We begin with the raw amino-acid sequence, 947 residues long: MSSALLEEVGWDADFAIPVANAENKALEEQIRKKQKDILNLDNKLNKHKDVINALTEHLKNLKQEVSHNQALCKAKEKETESEVHLKALAERETGRLKQEITRLESQLTTLNEKKNAQENSIFKATQKIDELTSQLNWDQQTLEAFLQESAHKDEDTMAIIKYAKQDERKIKELTLNIEKLTLESNQKRKTLDNELTETVTSQIALDKTAESFRQAHTERQELISQWENTIEQMRKRDQDIQQCAMMLAELNQTIREKNDLIKERKDFLEREIENNKELERNIGTVERQAFRLRQQLQEEEKNQRRLQDEVEVLKGTVDRTATDVETSRSQLSSMKKDIQDKTTKVEEAQLHNAALEEKLRMVTEAVLNGEEQAAQMEQLLREQEQNIKEIDSQLLRQKELLFKKSQEVQALRDKEKNVTAEICATRTALSNLDSKLRKLDQNFLQQQMIISNQDFQIQMLERKTLHLQGKVNTEEKKALEKKVADLAASLEEKKKTAANLNKQLKKLQDDIRCIKKDTEKIGAEKTNLSTKIQEVELFIETSEKERKKSRLKKQDSMVEKGLLKMEVQRLRNLLYDRADGVLTLEKRRLQLQTAMKEREEEIRVHREMLNKQVKLTEQERQGLSAAVNEAMSKIDKQRKRYEVLSVSLAPPEGEEDKSQAYFIIKAAQEKEELQRKGDELDAKIRKTEKEIHALENTLQVVNNCNSTHRKALTKVTESSPAHQEKLKLEEQRRAAEEKYKYKRRQTQELQEDIESMSNTLEGLLQEEKVLNEGIERTQAHVLSLNKDILSQEEKINRAVKQCAKYTKEIRSGKQSTEKTFEERDIELRELRDFNKSINKMLLDAMEGNPELSSILQIHFTQAGLSLPSPSSTPSSRLSSKPSSARSSASLHRSSNLSASSSPRSQSVSSPQMKTVDLGLGLSVTSPRGSQPSSAGSSRSSSKCKSP.

Coiled coils occupy residues 16–194 (AIPV…TLDN), 221–402 (QELI…KELL), 471–522 (KVNT…TEKI), and 582–813 (VLTL…IRSG). Low complexity-rich tracts occupy residues 866-911 (SLPS…VSSP) and 926-947 (SPRGSQPSSAGSSRSSSKCKSP). Residues 866–947 (SLPSPSSTPS…SRSSSKCKSP (82 aa)) form a disordered region.

Belongs to the CCDC39 family.

The protein localises to the cytoplasm. It localises to the cytoskeleton. The protein resides in the cilium axoneme. Its function is as follows. Required for assembly of dynein regulatory complex (DRC) and inner dynein arm (IDA) complexes, which are responsible for ciliary beat regulation, thereby playing a central role in motility in cilia and flagella. Probably acts together with ccdc40 to form a molecular ruler that determines the 96 nanometer (nm) repeat length and arrangements of components in cilia and flagella. Not required for outer dynein arm complexes assembly. The protein is Coiled-coil domain-containing protein 39 (ccdc39) of Danio rerio (Zebrafish).